A 333-amino-acid chain; its full sequence is MPAVAGSLYMASQHKGVPPPLPPPPRPLPVINLGRLTMDSASRALAVRDIVLACRERGCFEVVNHGISRSCMNGALEAASEFFQLSTERKEEFASDDIRQPIRYDTSSRDGISMSRSFLKHYANPLDDWIKFWPTQPPTYREKMGEYAVETQRVSMQLMEAILQGLGLGPSYLQEKLEGGVQFVALNNYPQSSAKKADKIGLAPHSDYGFLTILLQSSPGLEVMHHEDDAWTSVPAIPGALHVHVGDHLEVLSNGQLKSLVHRAVLNPNESRISIASIHGLSMDEEVHCAEELVDEHHPKMYRGSSFQDFLDFLPANMNRYKRYVESLRIDKP.

Residues 1–43 constitute a chloroplast transit peptide; sequence MPAVAGSLYMASQHKGVPPPLPPPPRPLPVINLGRLTMDSASR. Residues 180 to 281 form the Fe2OG dioxygenase domain; sequence GVQFVALNNY…RISIASIHGL (102 aa). Positions 205, 207, and 262 each coordinate Fe cation. Arginine 272 serves as a coordination point for 2-oxoglutarate.

Belongs to the iron/ascorbate-dependent oxidoreductase family. Requires Fe(2+) as cofactor. L-ascorbate serves as cofactor. As to expression, expressed in roots.

The protein resides in the plastid. Its subcellular location is the chloroplast. The catalysed reaction is melatonin + 2-oxoglutarate + O2 = 2-hydroxymelatonin + succinate + CO2. Functionally, involved in melatonin degradation. Catalyzes the hydroxylation of melatonin to produce 2-hydroxymelatonin. This chain is 2-oxoglutarate-dependent dioxygenase 21, chloroplastic, found in Oryza sativa subsp. japonica (Rice).